A 115-amino-acid polypeptide reads, in one-letter code: Parathyroid hormone (115 aa).

A signal peptide spans methionine 1–glycine 25. The propeptide occupies lysine 26–arginine 31. An important for receptor binding region spans residues arginine 51–glycine 69. A disordered region spans residues phenylalanine 73–glutamine 115.

The protein belongs to the parathyroid hormone family. As to quaternary structure, interacts with PTH1R (via N-terminal extracellular domain).

The protein resides in the secreted. Functionally, parathyroid hormone elevates calcium level by dissolving the salts in bone and preventing their renal excretion. Acts by binding to its receptor, PTH1R, activating G protein-coupled receptor signaling. Stimulates [1-14C]-2-deoxy-D-glucose (2DG) transport and glycogen synthesis in osteoblastic cells. The sequence is that of Parathyroid hormone (PTH) from Equus caballus (Horse).